The chain runs to 190 residues: Nucleoside triphosphate pyrophosphatase (190 aa).

The active-site Proton acceptor is the D69.

Belongs to the Maf family. A divalent metal cation is required as a cofactor.

Its subcellular location is the cytoplasm. The catalysed reaction is a ribonucleoside 5'-triphosphate + H2O = a ribonucleoside 5'-phosphate + diphosphate + H(+). The enzyme catalyses a 2'-deoxyribonucleoside 5'-triphosphate + H2O = a 2'-deoxyribonucleoside 5'-phosphate + diphosphate + H(+). Its function is as follows. Nucleoside triphosphate pyrophosphatase. May have a dual role in cell division arrest and in preventing the incorporation of modified nucleotides into cellular nucleic acids. The sequence is that of Nucleoside triphosphate pyrophosphatase from Helicobacter pylori (strain ATCC 700392 / 26695) (Campylobacter pylori).